Here is a 467-residue protein sequence, read N- to C-terminus: NALCN channel auxiliary factor 1 (467 aa).

The helical transmembrane segment at 40–60 (LSLASLLFFTVLLSDHLWFCA) threads the bilayer. Residues 121–161 (MGESSPAAQAHRLLSASSSPTLPPSPGGGGGSKGNRGKNNR) are disordered. N-linked (GlcNAc...) asparagine glycosylation is found at Asn-160, Asn-226, and Asn-254. 7 cysteine pairs are disulfide-bonded: Cys-200–Cys-270, Cys-235–Cys-322, Cys-255–Cys-270, Cys-313–Cys-350, Cys-333–Cys-386, Cys-339–Cys-385, and Cys-343–Cys-370. Positions 390 to 408 (SEEQTAPRPKGTVDRRDSC) are enriched in basic and acidic residues. The interval 390–409 (SEEQTAPRPKGTVDRRDSCP) is disordered. Residues 426–446 (LKLCVLVLILLHTVLTASAAQ) traverse the membrane as a helical segment. A glycan (N-linked (GlcNAc...) asparagine) is linked at Asn-462.

It belongs to the NALF family. In terms of assembly, component of the NALCN channel complex. NALCN complex consists of NALCN and auxiliary subunits, UNC79, UNC80 and NACL1. These auxiliary subunits are essential for the NALCN channel function.

The protein resides in the cell membrane. In terms of biological role, auxillary component of the NALCN sodium channel complex, a channel that regulates the resting membrane potential and controls neuronal excitability. The chain is NALCN channel auxiliary factor 1 from Mus musculus (Mouse).